We begin with the raw amino-acid sequence, 376 residues long: Transcription initiation factor IIA subunit 1 (376 aa).

At Ala2 the chain carries N-acetylalanine. Low complexity-rich tracts occupy residues 69 to 79 (QVQQQHQPQQQ) and 89 to 105 (QAQP…TQQV). Disordered regions lie at residues 69–107 (QVQQ…QVLI), 246–265 (AQAQ…PAQT), and 274–329 (DGTG…QELF). Ser280, Ser281, Ser316, and Ser321 each carry phosphoserine; by TAF1. Positions 280-329 (SSEEDEDEEEDYDDDEEEDKEKDGAEDGQVEEEPLNSEDDVSDEEGQELF) are enriched in acidic residues. Positions 343 and 344 each coordinate DNA.

This sequence belongs to the TFIIA subunit 1 family. As to quaternary structure, TFIIA is a heterodimer of the large unprocessed subunit 1 and a small subunit gamma. It was originally believed to be a heterotrimer of an alpha (p35), a beta (p19) and a gamma subunit (p12). TFIIA forms a complex with TBP. Part of TBP-based Pol II pre-initiation complex (PIC), in which Pol II core assembles with general transcription factors and other specific initiation factors including GTF2E1, GTF2E2, GTF2F1, GTF2F2, TCEA1, ERCC2, ERCC3, GTF2H2, GTF2H3, GTF2H4, GTF2H5, GTF2A1, GTF2A2, GTF2B and TBP; this large multi-subunit PIC complex mediates DNA unwinding and targets Pol II core to the transcription start site where the first phosphodiester bond forms. In terms of processing, the alpha and beta subunits are postranslationally produced from the precursor formby TASP1. The cleavage promotes proteasomal degradation.

It is found in the nucleus. Its function is as follows. TFIIA is a component of the transcription machinery of RNA polymerase II and plays an important role in transcriptional activation. TFIIA in a complex with TBP mediates transcriptional activity. This Pongo abelii (Sumatran orangutan) protein is Transcription initiation factor IIA subunit 1 (GTF2A1).